Reading from the N-terminus, the 496-residue chain is Protein RepS (496 aa).

A DNA-binding region spans residues 120-141 (SDILTTAIDLGFMPTLIIKSDK).

In terms of biological role, essential for replication. This Streptococcus pyogenes protein is Protein RepS (repS).